A 141-amino-acid chain; its full sequence is Hemoglobin subunit alpha-A (141 aa).

The region spanning 1-141 (VLSAADKTNV…VGTVLTAKYR (141 aa)) is the Globin domain. Residue His-58 coordinates O2. Residue His-87 participates in heme b binding.

Belongs to the globin family. Heterotetramer of two alpha chains and two beta chains. As to expression, red blood cells.

Functionally, involved in oxygen transport from the lung to the various peripheral tissues. This chain is Hemoglobin subunit alpha-A (HBAA), found in Turdus merula (Common blackbird).